The primary structure comprises 292 residues: Cytidine deaminase (292 aa).

2 consecutive CMP/dCMP-type deaminase domains span residues 47 to 167 and 186 to 292; these read TPLK…FGPK and DHQD…YYSL. 88–90 contributes to the substrate binding site; that stretch reads NQE. His101 provides a ligand contact to Zn(2+). Glu103 serves as the catalytic Proton donor. Cys128 and Cys131 together coordinate Zn(2+).

This sequence belongs to the cytidine and deoxycytidylate deaminase family. In terms of assembly, homodimer. It depends on Zn(2+) as a cofactor.

It catalyses the reaction cytidine + H2O + H(+) = uridine + NH4(+). The enzyme catalyses 2'-deoxycytidine + H2O + H(+) = 2'-deoxyuridine + NH4(+). Functionally, this enzyme scavenges exogenous and endogenous cytidine and 2'-deoxycytidine for UMP synthesis. The polypeptide is Cytidine deaminase (Haemophilus influenzae (strain PittEE)).